The sequence spans 337 residues: Tetraacyldisaccharide 4'-kinase (337 aa).

55-62 (TIGGNGKT) is an ATP binding site.

This sequence belongs to the LpxK family.

The catalysed reaction is a lipid A disaccharide + ATP = a lipid IVA + ADP + H(+). It participates in glycolipid biosynthesis; lipid IV(A) biosynthesis; lipid IV(A) from (3R)-3-hydroxytetradecanoyl-[acyl-carrier-protein] and UDP-N-acetyl-alpha-D-glucosamine: step 6/6. Transfers the gamma-phosphate of ATP to the 4'-position of a tetraacyldisaccharide 1-phosphate intermediate (termed DS-1-P) to form tetraacyldisaccharide 1,4'-bis-phosphate (lipid IVA). The polypeptide is Tetraacyldisaccharide 4'-kinase (Blochmanniella pennsylvanica (strain BPEN)).